Here is a 1405-residue protein sequence, read N- to C-terminus: MKDLLNLFNQQRQTLDFDAIKIALASPDLIRSWSYGEVKKPETINYRTFKPERDGLFCAAIFGPIKDYECLCGKYKRMKHRGVVCEKCGTEVTLAKVRRERMGHIDLASPVAHIWFLKSLPSRIGLMLDMTLRDIERVLYFEAYVVTEPGLTPLERRQLLTEEQYLTARQEYNDDFDAAMGAEAVYELLRTIDLQSEMTRLREEIASTGSETKLKRLTKRIKLIEAFLESGNRPEWMVMTVLPVLPPDLRPLVPLDGGRFATSDLNDLYRRVINRNNRLRRLLELNAPDIIVRNEKRMLQESVDALLDNGRRGRAITGTNKRPLKSLADMIKGKQGRFRQNLLGKRVDYSGRSVITVGPYLKLHQCGLPKKMALELFKPFVFAKLQRRGLATTIKAAKKLVEREEAEVWDILEEVIREHPVLLNRAPTLHRLGIQAFEPVLIEGKAIQLHPLVCTAFNADFDGDQMAVHVPLSLEAQLEARALMMSTNNILSPANGEPIIVPSQDVVLGLYYMSRALENKKGEGMVFANTSEVKRAYDNRVVELHAKVKVRITQVDVDAVDGKRTSGTSIVDTTVGRALLSEILPEGLPFQLANTEMTKKNISRLINSSYRLLGLKDTVVFADKLMYTGYAYATRAGVSIGIDDMLIPDEKKGILTEAEAEVLEIQEQYQSGLVTAGERYNKVVDIWSRTSERIAKAMMDTIGTEKVENAKGETIDQKSMNSLYIMADSGARGSQAQIRQLAGMRGLMARPDGSIIETPIKANFREGLNVQEYFNSTHGARKGLADTALKTANSGYLTRRLVDVAQDVVITEIDCGTTEGLIMTPIVEGGDVVEPLKERVLGRVVAEDVYLPGNDEEPIVTRNTLLDEAWVAKLEDASVQSVKVRSTISCESSFGVCARCYGRDLARGHQVNIGEAVGVIAAQSIGEPGTQLTMRTFHIGGAASRAAAVDNITVKTTGSVKFNNLKSVAHASGSLVAVSRSGELSVLDGHGRERERYKLPYGATITAKDGDAVKAGQSVANWDPHNHPIVSEVAGFIRFIDFVDGVTVIEKTDELTGLASREITDPKRRGAHAKELRPIVRIVDGKGNDLTIPNTDLPAQYLLPPRSIVNLQDGAAVGVGDVVAKIPQEASKTRDITGGLPRVADLFEARKPKDPAILAERSGIISFGKDTKGKQRLIIKDTDGSEHEELIPKYRQIIVFEGEHVTKGETVVDGEPSPQDILRLLGVEPLAAYLVKEIQDVYRLQGVKINDKHIEVITRQMLRKVEIVDQGNSKFLNGEQVERQRVIEENARLVKRNELPAKYDPVLLGITKASLATESFISAASFQETTRVLTEAAVRGTRDNLRGLKENVIVGRLIPAGTGLAYHAGRRKASGLTDSEMETLSGKPAGAEPVAALADAGADEE.

Cys-70, Cys-72, Cys-85, and Cys-88 together coordinate Zn(2+). Mg(2+) is bound by residues Asp-460, Asp-462, and Asp-464. Zn(2+) is bound by residues Cys-815, Cys-890, Cys-897, and Cys-900. The tract at residues 1375–1405 (GLTDSEMETLSGKPAGAEPVAALADAGADEE) is disordered.

Belongs to the RNA polymerase beta' chain family. As to quaternary structure, the RNAP catalytic core consists of 2 alpha, 1 beta, 1 beta' and 1 omega subunit. When a sigma factor is associated with the core the holoenzyme is formed, which can initiate transcription. Mg(2+) serves as cofactor. Requires Zn(2+) as cofactor.

It catalyses the reaction RNA(n) + a ribonucleoside 5'-triphosphate = RNA(n+1) + diphosphate. Functionally, DNA-dependent RNA polymerase catalyzes the transcription of DNA into RNA using the four ribonucleoside triphosphates as substrates. In Xanthomonas oryzae pv. oryzae (strain MAFF 311018), this protein is DNA-directed RNA polymerase subunit beta'.